Reading from the N-terminus, the 553-residue chain is Probable malate:quinone oxidoreductase (553 aa).

Residues 524-553 (PPPKIDLGAPSQATGNAPARPAKASADMAL) form a disordered region.

The protein belongs to the MQO family. FAD is required as a cofactor.

It carries out the reaction (S)-malate + a quinone = a quinol + oxaloacetate. It participates in carbohydrate metabolism; tricarboxylic acid cycle; oxaloacetate from (S)-malate (quinone route): step 1/1. The sequence is that of Probable malate:quinone oxidoreductase from Burkholderia cenocepacia (strain HI2424).